The following is an 89-amino-acid chain: Large ribosomal subunit protein bL27 (89 aa).

The tract at residues M1–G22 is disordered.

The protein belongs to the bacterial ribosomal protein bL27 family.

The polypeptide is Large ribosomal subunit protein bL27 (Brucella melitensis biotype 1 (strain ATCC 23456 / CCUG 17765 / NCTC 10094 / 16M)).